The sequence spans 657 residues: Serine/threonine kinase NLK (657 aa).

A Protein kinase domain is found at 208-554 (SQPDRPIGYG…VEEALSHPYL (347 aa)). ATP-binding positions include 214-222 (IGYGAFGVV) and Lys-237. The active-site Proton acceptor is the Asp-391.

The protein belongs to the protein kinase superfamily. Ser/Thr protein kinase family. In terms of assembly, component of the beta-catenin-lit-1 complex (also called the lit-1/wrm-1 complex or the wrm-1/lit-1 kinase complex) at least composed of lit-1 and wrm-1. Interacts with wrm-1 (via N-terminus); the interaction is direct and activates lit-1 kinase activity which leads to the phosphorylation of pop-1. This promotes pop-1 interaction with par-5 and translocation of pop-1 from the nucleus to the cytoplasm. Interacts with pop-1 (when phosphorylated on 'Ser-125'); the interaction is dependent on the beta-catenin-lit-1 complex. Requires Mg(2+) as cofactor.

The protein resides in the cytoplasm. It localises to the cell cortex. The protein localises to the nucleus. The enzyme catalyses L-seryl-[protein] + ATP = O-phospho-L-seryl-[protein] + ADP + H(+). It catalyses the reaction L-threonyl-[protein] + ATP = O-phospho-L-threonyl-[protein] + ADP + H(+). Functionally, has a role in the Wnt signaling pathway controlling the asymmetry of cell divisions during embryogenesis. Operates in the AB and EMS cell lineages influencing cell specification. Required for body wall muscle development, endoderm development, pop-1 asymmetry and T-cell division asymmetry. Component of the beta-catenin-lit-1 complex which promotes the phosphorylation, down-regulation and subcellular relocation of pop-1. Regulates plp-1 nuclear localization in embryos. Plays a role in male tail tip morphogenesis. This is Serine/threonine kinase NLK from Caenorhabditis briggsae.